The following is a 344-amino-acid chain: S-adenosylmethionine:tRNA ribosyltransferase-isomerase (344 aa).

The protein belongs to the QueA family. In terms of assembly, monomer.

The protein localises to the cytoplasm. The enzyme catalyses 7-aminomethyl-7-carbaguanosine(34) in tRNA + S-adenosyl-L-methionine = epoxyqueuosine(34) in tRNA + adenine + L-methionine + 2 H(+). The protein operates within tRNA modification; tRNA-queuosine biosynthesis. Its function is as follows. Transfers and isomerizes the ribose moiety from AdoMet to the 7-aminomethyl group of 7-deazaguanine (preQ1-tRNA) to give epoxyqueuosine (oQ-tRNA). The protein is S-adenosylmethionine:tRNA ribosyltransferase-isomerase of Heliobacterium modesticaldum (strain ATCC 51547 / Ice1).